The following is a 209-amino-acid chain: Orotate phosphoribosyltransferase (209 aa).

Residues Arg96, Lys100, His102, and 122 to 130 contribute to the 5-phospho-alpha-D-ribose 1-diphosphate site; that span reads EDLISTGGS. Ser126 is a binding site for orotate.

Belongs to the purine/pyrimidine phosphoribosyltransferase family. PyrE subfamily. In terms of assembly, homodimer. Mg(2+) is required as a cofactor.

The enzyme catalyses orotidine 5'-phosphate + diphosphate = orotate + 5-phospho-alpha-D-ribose 1-diphosphate. Its pathway is pyrimidine metabolism; UMP biosynthesis via de novo pathway; UMP from orotate: step 1/2. Functionally, catalyzes the transfer of a ribosyl phosphate group from 5-phosphoribose 1-diphosphate to orotate, leading to the formation of orotidine monophosphate (OMP). The polypeptide is Orotate phosphoribosyltransferase (Lactococcus lactis subsp. cremoris (strain MG1363)).